Consider the following 417-residue polypeptide: Gamma-glutamyl phosphate reductase (417 aa).

It belongs to the gamma-glutamyl phosphate reductase family.

Its subcellular location is the cytoplasm. The enzyme catalyses L-glutamate 5-semialdehyde + phosphate + NADP(+) = L-glutamyl 5-phosphate + NADPH + H(+). Its pathway is amino-acid biosynthesis; L-proline biosynthesis; L-glutamate 5-semialdehyde from L-glutamate: step 2/2. In terms of biological role, catalyzes the NADPH-dependent reduction of L-glutamate 5-phosphate into L-glutamate 5-semialdehyde and phosphate. The product spontaneously undergoes cyclization to form 1-pyrroline-5-carboxylate. This chain is Gamma-glutamyl phosphate reductase, found in Streptococcus agalactiae serotype Ia (strain ATCC 27591 / A909 / CDC SS700).